A 180-amino-acid chain; its full sequence is NADH-quinone oxidoreductase subunit I (180 aa).

4Fe-4S ferredoxin-type domains lie at 48 to 80 and 90 to 119; these read IVLT…LQKA and EFFR…LTPD. [4Fe-4S] cluster contacts are provided by cysteine 60, cysteine 63, cysteine 66, cysteine 70, cysteine 99, cysteine 102, cysteine 105, and cysteine 109.

It belongs to the complex I 23 kDa subunit family. In terms of assembly, NDH-1 is composed of 13 different subunits. Subunits NuoA, H, J, K, L, M, N constitute the membrane sector of the complex. It depends on [4Fe-4S] cluster as a cofactor.

It localises to the cell inner membrane. The enzyme catalyses a quinone + NADH + 5 H(+)(in) = a quinol + NAD(+) + 4 H(+)(out). Functionally, NDH-1 shuttles electrons from NADH, via FMN and iron-sulfur (Fe-S) centers, to quinones in the respiratory chain. The immediate electron acceptor for the enzyme in this species is believed to be ubiquinone. Couples the redox reaction to proton translocation (for every two electrons transferred, four hydrogen ions are translocated across the cytoplasmic membrane), and thus conserves the redox energy in a proton gradient. The protein is NADH-quinone oxidoreductase subunit I of Erwinia tasmaniensis (strain DSM 17950 / CFBP 7177 / CIP 109463 / NCPPB 4357 / Et1/99).